Reading from the N-terminus, the 296-residue chain is 33 kDa chaperonin (296 aa).

Intrachain disulfides connect C236–C238 and C269–C272.

Belongs to the HSP33 family. Post-translationally, under oxidizing conditions two disulfide bonds are formed involving the reactive cysteines. Under reducing conditions zinc is bound to the reactive cysteines and the protein is inactive.

The protein resides in the cytoplasm. In terms of biological role, redox regulated molecular chaperone. Protects both thermally unfolding and oxidatively damaged proteins from irreversible aggregation. Plays an important role in the bacterial defense system toward oxidative stress. This chain is 33 kDa chaperonin, found in Lactobacillus acidophilus (strain ATCC 700396 / NCK56 / N2 / NCFM).